The primary structure comprises 962 residues: Putative primase C962R (962 aa).

Residues 607-775 (ELDARLWIMF…PDPNNSYEKK (169 aa)) form the SF3 helicase domain. 636-643 (GGGCNGKT) serves as a coordination point for ATP.

The protein belongs to the asfivirus helicase C962R family.

The sequence is that of Putative primase C962R from African swine fever virus (isolate Warthog/Namibia/Wart80/1980) (ASFV).